A 144-amino-acid chain; its full sequence is MRLNSLSPAEGAKHSAKRLGRGIGSGLGKTGGRGHKGQKSRTGGGVRRGFEGGQMPLYRRLPKFGFTSLKSFHVAEIRLNDLAKVDGNEVTLESLKAANVITKDILSVKVILAGKIEKAVVVKGLGVTKGAKAAIEAAGGSIEE.

Positions 1-52 (MRLNSLSPAEGAKHSAKRLGRGIGSGLGKTGGRGHKGQKSRTGGGVRRGFEG) are disordered. Positions 21–31 (RGIGSGLGKTG) are enriched in gly residues.

Belongs to the universal ribosomal protein uL15 family. As to quaternary structure, part of the 50S ribosomal subunit.

In terms of biological role, binds to the 23S rRNA. The sequence is that of Large ribosomal subunit protein uL15 from Actinobacillus pleuropneumoniae serotype 5b (strain L20).